We begin with the raw amino-acid sequence, 456 residues long: uncharacterized protein (456 aa).

Residues 3–61 form the TRAM domain; the sequence is LMRKNETREFLIEDIEFPAVGVAFYNDKKVYIKGAVPGQKVLARVSKVRREKIEAKLKE. [4Fe-4S] cluster-binding residues include cysteine 74, cysteine 80, cysteine 83, and cysteine 163. Positions 289, 318, 339, and 384 each coordinate S-adenosyl-L-methionine. Catalysis depends on cysteine 411, which acts as the Nucleophile.

Belongs to the class I-like SAM-binding methyltransferase superfamily. RNA M5U methyltransferase family.

This is an uncharacterized protein from Clostridium acetobutylicum (strain ATCC 824 / DSM 792 / JCM 1419 / IAM 19013 / LMG 5710 / NBRC 13948 / NRRL B-527 / VKM B-1787 / 2291 / W).